The chain runs to 230 residues: Type II restriction enzyme Eco47I (230 aa).

The catalysed reaction is Endonucleolytic cleavage of DNA to give specific double-stranded fragments with terminal 5'-phosphates.. A P subtype restriction enzyme that recognizes the double-stranded sequence 5'-GGWCC-3' and cleaves after G-1. This chain is Type II restriction enzyme Eco47I, found in Escherichia coli.